A 215-amino-acid polypeptide reads, in one-letter code: Ribosomal RNA small subunit methyltransferase G (215 aa).

S-adenosyl-L-methionine contacts are provided by residues glycine 77, phenylalanine 82, 130 to 131 (IE), and arginine 146.

The protein belongs to the methyltransferase superfamily. RNA methyltransferase RsmG family.

It localises to the cytoplasm. The enzyme catalyses guanosine(527) in 16S rRNA + S-adenosyl-L-methionine = N(7)-methylguanosine(527) in 16S rRNA + S-adenosyl-L-homocysteine. Functionally, specifically methylates the N7 position of guanine in position 527 of 16S rRNA. In Bartonella quintana (strain Toulouse) (Rochalimaea quintana), this protein is Ribosomal RNA small subunit methyltransferase G.